The primary structure comprises 875 residues: Protein translocase subunit SecA (875 aa).

Residues Q87, 105 to 109, and D512 each bind ATP; that span reads GEGKT. Residues C860, C862, C871, and H872 each coordinate Zn(2+).

It belongs to the SecA family. Monomer and homodimer. Part of the essential Sec protein translocation apparatus which comprises SecA, SecYEG and auxiliary proteins SecDF-YajC and YidC. Zn(2+) is required as a cofactor.

Its subcellular location is the cell inner membrane. It localises to the cytoplasm. It catalyses the reaction ATP + H2O + cellular proteinSide 1 = ADP + phosphate + cellular proteinSide 2.. In terms of biological role, part of the Sec protein translocase complex. Interacts with the SecYEG preprotein conducting channel. Has a central role in coupling the hydrolysis of ATP to the transfer of proteins into and across the cell membrane, serving both as a receptor for the preprotein-SecB complex and as an ATP-driven molecular motor driving the stepwise translocation of polypeptide chains across the membrane. The polypeptide is Protein translocase subunit SecA (Buchnera aphidicola subsp. Acyrthosiphon pisum (strain APS) (Acyrthosiphon pisum symbiotic bacterium)).